Reading from the N-terminus, the 231-residue chain is UPF0173 metal-dependent hydrolase AF_1265 (231 aa).

It belongs to the UPF0173 family.

The sequence is that of UPF0173 metal-dependent hydrolase AF_1265 from Archaeoglobus fulgidus (strain ATCC 49558 / DSM 4304 / JCM 9628 / NBRC 100126 / VC-16).